We begin with the raw amino-acid sequence, 264 residues long: Carbonic anhydrase (264 aa).

Positions 1–33 (MSSTLYRRQLLKLLGMSVLGTSFSSCVTSPARA) form a signal peptide, tat-type signal. Residues 36 to 264 (VNWGYIGKVG…LNDRLVIEAI (229 aa)) enclose the Alpha-carbonic anhydrase domain. 3 residues coordinate Zn(2+): His-127, His-129, and His-146. 214-215 (TT) contacts substrate.

The protein belongs to the alpha-carbonic anhydrase family. Requires Zn(2+) as cofactor. Predicted to be exported by the Tat system. The position of the signal peptide cleavage has not been experimentally proven.

It catalyses the reaction hydrogencarbonate + H(+) = CO2 + H2O. Its function is as follows. Reversible hydration of carbon dioxide. The polypeptide is Carbonic anhydrase (ecaA) (Nostoc sp. (strain PCC 7120 / SAG 25.82 / UTEX 2576)).